Consider the following 394-residue polypeptide: Xylose isomerase (394 aa).

Catalysis depends on residues histidine 54 and aspartate 57. Residues glutamate 181, glutamate 217, histidine 220, aspartate 245, aspartate 255, aspartate 257, and aspartate 292 each contribute to the Mg(2+) site.

Belongs to the xylose isomerase family. Homotetramer. It depends on Mg(2+) as a cofactor.

The protein resides in the cytoplasm. It carries out the reaction alpha-D-xylose = alpha-D-xylulofuranose. The polypeptide is Xylose isomerase (xylA) (Actinoplanes missouriensis (strain ATCC 14538 / DSM 43046 / CBS 188.64 / JCM 3121 / NBRC 102363 / NCIMB 12654 / NRRL B-3342 / UNCC 431)).